The following is a 427-amino-acid chain: Tyrosine--tRNA ligase (427 aa).

L-tyrosine is bound at residue tyrosine 33. The 'HIGH' region signature appears at 38–47; sequence PTAPSLHVGN. Tyrosine 168 and glutamine 172 together coordinate L-tyrosine. The 'KMSKS' region signature appears at 228 to 232; sequence KFGKS. Residue lysine 231 participates in ATP binding. The 69-residue stretch at 358–426 folds into the S4 RNA-binding domain; that stretch reads EHMLDLVAST…GKKHHYLIKV (69 aa).

This sequence belongs to the class-I aminoacyl-tRNA synthetase family. TyrS type 1 subfamily. Homodimer.

It localises to the cytoplasm. It catalyses the reaction tRNA(Tyr) + L-tyrosine + ATP = L-tyrosyl-tRNA(Tyr) + AMP + diphosphate + H(+). Functionally, catalyzes the attachment of tyrosine to tRNA(Tyr) in a two-step reaction: tyrosine is first activated by ATP to form Tyr-AMP and then transferred to the acceptor end of tRNA(Tyr). The polypeptide is Tyrosine--tRNA ligase (Amoebophilus asiaticus (strain 5a2)).